We begin with the raw amino-acid sequence, 76 residues long: Omega-scoloptoxin(13)-Ssm2a (76 aa).

Positions 1–22 (MAYIYALIFAIVVCMNTDVIQA) are cleaved as a signal peptide.

Contains 4 disulfide bonds. As to expression, expressed by the venom gland.

It localises to the secreted. Its function is as follows. Inhibits voltage-gated calcium channel (Cav) currents in DRG neurons (IC(50)=1590 nM). The protein is Omega-scoloptoxin(13)-Ssm2a of Scolopendra mutilans (Chinese red-headed centipede).